Reading from the N-terminus, the 354-residue chain is DNA polymerase IV (354 aa).

The region spanning 8–189 (IIHVDMDCFY…LPLEKIPGVG (182 aa)) is the UmuC domain. Positions 12 and 107 each coordinate Mg(2+). Residue Glu108 is part of the active site.

The protein belongs to the DNA polymerase type-Y family. Monomer. Requires Mg(2+) as cofactor.

Its subcellular location is the cytoplasm. The enzyme catalyses DNA(n) + a 2'-deoxyribonucleoside 5'-triphosphate = DNA(n+1) + diphosphate. Its function is as follows. Poorly processive, error-prone DNA polymerase involved in untargeted mutagenesis. Copies undamaged DNA at stalled replication forks, which arise in vivo from mismatched or misaligned primer ends. These misaligned primers can be extended by PolIV. Exhibits no 3'-5' exonuclease (proofreading) activity. May be involved in translesional synthesis, in conjunction with the beta clamp from PolIII. The polypeptide is DNA polymerase IV (Vibrio parahaemolyticus serotype O3:K6 (strain RIMD 2210633)).